Here is a 624-residue protein sequence, read N- to C-terminus: Alpha-amylase 1 (624 aa).

The signal sequence occupies residues 1 to 28; that stretch reads MLLINFFIAVLGVISLSPIVVARYILRR. The CBM21 domain maps to 40–133; it reads ESVTGSNHVQ…SDTSVTYTTS (94 aa). Cysteines 177 and 185 form a disulfide. A substrate-binding site is contributed by Trp-230. Asn-268 serves as a coordination point for Ca(2+). His-269 contributes to the substrate binding site. A disulfide bond links Cys-297 and Cys-311. Asn-304 carries an N-linked (GlcNAc...) asparagine glycan. Ca(2+) contacts are provided by Glu-309 and Asp-322. N-linked (GlcNAc...) asparagine glycosylation occurs at Asn-344. Arg-351 lines the substrate pocket. Residues Asp-353, His-357, and Glu-377 each contribute to the Ca(2+) site. Residue Asp-353 is the Nucleophile of the active site. Residue 356–357 coordinates substrate; that stretch reads KH. Glu-377 acts as the Proton donor in catalysis. Gly-381 lines the substrate pocket. Cys-387 and Cys-430 form a disulfide bridge. Substrate contacts are provided by Asp-444 and Arg-491. Residues Cys-587 and Cys-622 are joined by a disulfide bond.

This sequence belongs to the glycosyl hydrolase 13 family. It depends on Ca(2+) as a cofactor.

Its subcellular location is the secreted. The catalysed reaction is Endohydrolysis of (1-&gt;4)-alpha-D-glucosidic linkages in polysaccharides containing three or more (1-&gt;4)-alpha-linked D-glucose units.. This chain is Alpha-amylase 1 (LKA1), found in Lipomyces kononenkoae (Yeast).